We begin with the raw amino-acid sequence, 1103 residues long: MQVPGTMPAPVLKGQALWLPLLLMLSPQASGGLVITPPGPELVLNISSTFVLTCSGPAPVVWERLSQEPLQKMARTQDGTFSSTLTLTNVTGLDTGEYFCTYKGSHGLEPDGRKRLYIFVPDPTMGFLPVDPEELFIFLTEITEITIPCRVTDPRLVVTLHEKKVDIPLPIPYDHQRGFSGTFEDKTYVCKTTIGDKEVDSEAYYVYSLQVSSINVSVNAVQTVVRQGENITIMCIVTGNEVVNFEWTYPRMESGRLVEPVTDFLFNVPSHIRSILHIPSAELGDSGTYICNVSESVNDHRDEKSINVTVVESGYVRLLGELDAVQFAELHRSRALQVVFEAYPPPTVVWFKDNRTLGDSSAGEIALSTRNVSETRYVSELTLVRVKVAEAGYYTMRAFHEDAEAQLSFQLQVNVPVRVLELSESHPASGEQTVRCRGRGMPQPHLTWSTCSDLKRCPRELPPTPLGNSSEEESQLETNVTYWPEDQEFEVVSTLRLRRVDQPLSVRCTLHNLLGHDMQEVTVVPHSLPFKVVVISAILALVVLTIISLIILIMLWQKKPRYEIRWKVIESVSSDGHEYIYVDPMQLPYDSTWELPRDQLVLGRTLGSGAFGQVVEATAHGLSHSQATMKVAVKMLKSTARSSEKQALMSELKIMSHLGPHLNVVNLLGACTKGGPIYIITEYCRYGDLVDYLHRNKHTFLQLCSDKRRPPSAELYSNALPAGLPLPSHVSLPGESDGGYMDMSKDESVDYVPMLDMKGGVKYADIESSSYMAPYDNYVPTAPERTCRATLINESPVLSYTDLVGFSYQVANGMEFLASKNCVHRDLAARNVLICEGKLVKICDFGLARDIMRDSNYISKGSTFLPLKWMAPESIFNSLYTTLSDVWSFGILLWEIFTLGGTPYPELPMNEQFYNAIKRGYRMAQPAHASDEIYEIMQKCWEEKFEIRPPFSQLVLLLERLLGEGYKKKYQQVDEEFLRSDHPAVLRSQARLPGFPGLRSPLDTSSVLYTAVQPNEGDNDYIIPLPDPKPEVADGPLESSPSLASSTLNEVNTSSTISCDSPLEPQEEPEPEPEPQPEPQVVPEPPLDSSCPGPRAEAEDSFL.

Residues 1 to 31 (MQVPGTMPAPVLKGQALWLPLLLMLSPQASG) form the signal peptide. 5 consecutive Ig-like C2-type domains span residues 33 to 120 (LVIT…YIFV), 129 to 210 (PVDP…YSLQ), 214 to 309 (INVS…INVT), 331 to 403 (HRSR…HEDA), and 416 to 524 (PVRV…VTVV). Topologically, residues 33–532 (LVITPPGPEL…VVPHSLPFKV (500 aa)) are extracellular. Residues asparagine 45 and asparagine 89 are each glycosylated (N-linked (GlcNAc...) asparagine). Intrachain disulfides connect cysteine 54–cysteine 100 and cysteine 149–cysteine 190. Asparagine 215 and asparagine 230 each carry an N-linked (GlcNAc...) asparagine glycan. Cysteine 235 and cysteine 291 are joined by a disulfide. Residues asparagine 292, asparagine 307, asparagine 354, asparagine 371, asparagine 468, and asparagine 479 are each glycosylated (N-linked (GlcNAc...) asparagine). An intrachain disulfide couples cysteine 436 to cysteine 508. Residues 533–553 (VVISAILALVVLTIISLIILI) form a helical membrane-spanning segment. Over 554–1103 (MLWQKKPRYE…PRAEAEDSFL (550 aa)) the chain is Cytoplasmic. Tyrosine 562, tyrosine 579, and tyrosine 581 each carry phosphotyrosine; by autocatalysis. Residues 600 to 962 (LVLGRTLGSG…QLVLLLERLL (363 aa)) form the Protein kinase domain. Residues 606–614 (LGSGAFGQV) and lysine 634 contribute to the ATP site. A Phosphotyrosine; by ABL1 and ABL2 modification is found at tyrosine 686. 7 positions are modified to phosphotyrosine; by autocatalysis: tyrosine 716, tyrosine 740, tyrosine 751, tyrosine 763, tyrosine 771, tyrosine 775, and tyrosine 778. The active-site Proton acceptor is the aspartate 826. Residue tyrosine 857 is modified to Phosphotyrosine; by autocatalysis. Tyrosine 934 and tyrosine 970 each carry phosphotyrosine; by ABL1 and ABL2. Tyrosine 1009 and tyrosine 1021 each carry phosphotyrosine; by autocatalysis. The segment at 1017–1103 (GDNDYIIPLP…PRAEAEDSFL (87 aa)) is disordered. Residues 1039-1059 (SSPSLASSTLNEVNTSSTISC) are compositionally biased toward polar residues. The segment covering 1065 to 1075 (PQEEPEPEPEP) has biased composition (acidic residues). Pro residues predominate over residues 1076-1086 (QPEPQVVPEPP).

This sequence belongs to the protein kinase superfamily. Tyr protein kinase family. CSF-1/PDGF receptor subfamily. As to quaternary structure, interacts with homodimeric PDGFB and PDGFD, and with heterodimers formed by PDGFA and PDGFB. May also interact with homodimeric PDGFC. Monomer in the absence of bound ligand. Interaction with homodimeric PDGFB, heterodimers formed by PDGFA and PDGFB or homodimeric PDGFD, leads to receptor dimerization, where both PDGFRA homodimers and heterodimers with PDGFRB are observed. Interacts with SH2B2/APS. Interacts directly (tyrosine phosphorylated) with SHB. Interacts (tyrosine phosphorylated) with PIK3R1 and RASA1. Interacts (tyrosine phosphorylated) with CBL. Interacts (tyrosine phosphorylated) with SRC and SRC family kinases. Interacts (tyrosine phosphorylated) with PIK3C2B, maybe indirectly. Interacts (tyrosine phosphorylated) with SHC1, GRB7, GRB10 and NCK1. Interaction with GRB2 is mediated by SHC1. Interacts (via C-terminus) with NHERF1. Post-translationally, N-glycosylated. In terms of processing, ubiquitinated. After autophosphorylation, the receptor is polyubiquitinated, leading to its degradation. Autophosphorylated on tyrosine residues upon ligand binding. Autophosphorylation occurs in trans, i.e. one subunit of the dimeric receptor phosphorylates tyrosine residues on the other subunit. Phosphorylation at Tyr-579, and to a lesser degree, Tyr-581 is important for interaction with SRC. Phosphorylation at Tyr-716 is important for interaction with GRB2. Phosphorylation at Tyr-740 and Tyr-751 is important for interaction with PIK3R1. Phosphorylation at Tyr-751 is important for interaction with NCK1. Phosphorylation at Tyr-771 and Tyr-857 is important for interaction with RASA1/GAP. Phosphorylation at Tyr-857 is important for efficient phosphorylation of PLCG1 and PTPN11, resulting in increased phosphorylation of AKT1, MAPK1/ERK2 and/or MAPK3/ERK1, PDCD6IP/ALIX and STAM, and in increased cell proliferation. Phosphorylation at Tyr-1009 is important for interaction with PTPN11. Phosphorylation at Tyr-1009 and Tyr-1021 is important for interaction with PLCG1. Dephosphorylated by PTPRJ at Tyr-751, Tyr-857, Tyr-1009 and Tyr-1021. Dephosphorylated by PTPN2 at Tyr-579 and Tyr-1021.

It is found in the cell membrane. Its subcellular location is the cytoplasmic vesicle. The protein resides in the lysosome lumen. It carries out the reaction L-tyrosyl-[protein] + ATP = O-phospho-L-tyrosyl-[protein] + ADP + H(+). With respect to regulation, present in an inactive conformation in the absence of bound ligand. Binding of PDGFB and/or PDGFD leads to dimerization and activation by autophosphorylation on tyrosine residues. Tyrosine-protein kinase that acts as a cell-surface receptor for homodimeric PDGFB and PDGFD and for heterodimers formed by PDGFA and PDGFB, and plays an essential role in the regulation of embryonic development, cell proliferation, survival, differentiation, chemotaxis and migration. Plays an essential role in blood vessel development by promoting proliferation, migration and recruitment of pericytes and smooth muscle cells to endothelial cells. Plays a role in the migration of vascular smooth muscle cells and the formation of neointima at vascular injury sites. Required for normal development of the cardiovascular system. Required for normal recruitment of pericytes (mesangial cells) in the kidney glomerulus, and for normal formation of a branched network of capillaries in kidney glomeruli. Promotes rearrangement of the actin cytoskeleton and the formation of membrane ruffles. Binding of its cognate ligands - homodimeric PDGFB, heterodimers formed by PDGFA and PDGFB or homodimeric PDGFD -leads to the activation of several signaling cascades; the response depends on the nature of the bound ligand and is modulated by the formation of heterodimers between PDGFRA and PDGFRB. Phosphorylates PLCG1, PIK3R1, PTPN11, RASA1/GAP, CBL, SHC1 and NCK1. Activation of PLCG1 leads to the production of the cellular signaling molecules diacylglycerol and inositol 1,4,5-trisphosphate, mobilization of cytosolic Ca(2+) and the activation of protein kinase C. Phosphorylation of PIK3R1, the regulatory subunit of phosphatidylinositol 3-kinase, leads to the activation of the AKT1 signaling pathway. Phosphorylation of SHC1, or of the C-terminus of PTPN11, creates a binding site for GRB2, resulting in the activation of HRAS, RAF1 and down-stream MAP kinases, including MAPK1/ERK2 and/or MAPK3/ERK1. Promotes phosphorylation and activation of SRC family kinases. Promotes phosphorylation of PDCD6IP/ALIX and STAM. Receptor signaling is down-regulated by protein phosphatases that dephosphorylate the receptor and its down-stream effectors, and by rapid internalization of the activated receptor. The protein is Platelet-derived growth factor receptor beta (PDGFRB) of Canis lupus familiaris (Dog).